The sequence spans 485 residues: Telomeric DNA-binding factor trf1 (485 aa).

The segment covering 1-20 (MSKRSLDPSDDFKGQKRLAI) has biased composition (basic and acidic residues). A disordered region spans residues 1–23 (MSKRSLDPSDDFKGQKRLAIDPE). The 58-residue stretch at 400–457 (RRVANRRSWTKEEEEALLDGLDLVKGPRWSQILELYGPGGKKSEVLKYRNQVQLKDKA) folds into the HTH myb-type domain. Positions 428–453 (WSQILELYGPGGKKSEVLKYRNQVQL) form a DNA-binding region, H-T-H motif.

In terms of assembly, homodimer.

The protein resides in the nucleus. Functionally, binds the telomeric double-stranded TTACAGG repeat and regulates telomere length. This is Telomeric DNA-binding factor trf1 (trf1) from Schizosaccharomyces pombe (strain 972 / ATCC 24843) (Fission yeast).